Reading from the N-terminus, the 485-residue chain is uncharacterized protein (485 aa).

Transmembrane regions (helical) follow at residues 13-33, 38-58, 79-99, 111-131, 160-180, 211-231, 234-254, 297-317, 321-341, 365-385, 388-408, 420-440, and 445-465; these read WSAL…VILS, PFEF…DMLA, ALYW…IILS, LSFL…GQQY, VIIG…LLTV, LLFS…SSIT, IVAR…FNVA, INFP…YLVF, WLFI…RMVA, IIIF…VGAA, FLIC…KPVL, FIPF…DIYI, and LTFF…TIFI.

Belongs to the polysaccharide synthase family.

The protein resides in the cell membrane. This is an uncharacterized protein from Klebsiella pneumoniae.